The sequence spans 299 residues: Hydrogenase maturation factor HypB (299 aa).

3 residues coordinate Ni(2+): Cys-2, Cys-5, and Cys-7. A disordered region spans residues 18–57 (EVGDDGHGHHHHDGHHDHDHDHDHHRGDHEHDDHHHAEDG). Positions 31-57 (GHHDHDHDHDHHRGDHEHDDHHHAEDG) are enriched in basic and acidic residues. The tract at residues 107–268 (ALNFVSSPGS…LRVNPRLQTL (162 aa)) is G-domain. Ni(2+) is bound by residues Cys-167, His-168, and Cys-199. Positions 167, 168, and 199 each coordinate Zn(2+).

Belongs to the SIMIBI class G3E GTPase family. HypB/HupM subfamily.

Its function is as follows. Involved in the maturation of [NiFe] hydrogenases. Required for nickel insertion into the metal center of the hydrogenase. Exhibits a low intrinsic GTPase activity, which is essential for nickel insertion. Is able to bind 4 nickel ions per subunit. Can also bind zinc. This is Hydrogenase maturation factor HypB from Rhizobium leguminosarum bv. viciae.